Reading from the N-terminus, the 879-residue chain is Alanine--tRNA ligase (879 aa).

Zn(2+) is bound by residues His566, His570, Cys668, and His672.

It belongs to the class-II aminoacyl-tRNA synthetase family. Zn(2+) serves as cofactor.

The protein localises to the cytoplasm. The catalysed reaction is tRNA(Ala) + L-alanine + ATP = L-alanyl-tRNA(Ala) + AMP + diphosphate. Catalyzes the attachment of alanine to tRNA(Ala) in a two-step reaction: alanine is first activated by ATP to form Ala-AMP and then transferred to the acceptor end of tRNA(Ala). Also edits incorrectly charged Ser-tRNA(Ala) and Gly-tRNA(Ala) via its editing domain. In Listeria monocytogenes serovar 1/2a (strain ATCC BAA-679 / EGD-e), this protein is Alanine--tRNA ligase.